The following is a 353-amino-acid chain: C-X-C chemokine receptor type 4 (353 aa).

The tract at residues 1-22 is important for chemokine binding and signaling; that stretch reads MEGIRIFTSDNYTEDDLGSGDY. The Extracellular portion of the chain corresponds to 1–39; it reads MEGIRIFTSDNYTEDDLGSGDYDSMKEPCFREENAHFNR. N-linked (GlcNAc...) asparagine glycosylation is present at N11. Y12 carries the sulfotyrosine modification. S19 is a glycosylation site (O-linked (Xyl...) (chondroitin sulfate) serine). The residue at position 22 (Y22) is a Sulfotyrosine. Cystine bridges form between C29-C275 and C110-C187. The chain crosses the membrane as a helical span at residues 40–64; sequence IFLPTVYSIIFLTGIVGNGLVILVM. The Cytoplasmic portion of the chain corresponds to 65–78; sequence GYQKKLRSMTDKYR. A helical membrane pass occupies residues 79–100; it reads LHLSVADLLFVLTLPFWAVDAV. Positions 95–98 are chemokine binding; the sequence is WAVD. Residues 101–111 lie on the Extracellular side of the membrane; that stretch reads ANWYFGKFLCK. The helical transmembrane segment at 112–131 threads the bilayer; sequence AVHVIYTVNLYSSVLILAFI. Residues 114–118 form a chemokine binding region; it reads HVIYT. The Cytoplasmic portion of the chain corresponds to 132–155; sequence SLDRYLAIVHATNSQKPRKLLAEK. Residues 134–136 carry the Important for signaling motif; it reads DRY. Residues 136-148 form an involved in dimerization; when bound to chemokine region; sequence YLAIVHATNSQKP. Residues 156–175 form a helical membrane-spanning segment; it reads VVYVGVWLPAVLLTIPDLIF. The Extracellular segment spans residues 176-196; sequence ADIKEVDERYICDRFYPSDLW. The interval 187-191 is chemokine binding, important for signaling; the sequence is CDRFY. The interval 192 to 211 is involved in dimerization; the sequence is PSDLWLVVFQFQHIVVGLLL. A helical transmembrane segment spans residues 197–217; it reads LVVFQFQHIVVGLLLPGIVIL. The Cytoplasmic segment spans residues 218–242; that stretch reads SCYCIIISKLSHSKGYQKRKALKTT. Residues 243 to 262 form a helical membrane-spanning segment; the sequence is VILILTFFACWLPYYIGISI. Over 263–283 the chain is Extracellular; it reads DSFILLEIIQQGCEFESTVHK. The interval 267–269 is involved in dimerization; that stretch reads LLE. Residues 284–303 form a helical membrane-spanning segment; sequence WISITEALAFFHCCLNPILY. Topologically, residues 304 to 353 are cytoplasmic; it reads AFLGAKFKTSAQHALTSVSRGSSLKILSKGKRGGHSSVSTESESSSFHSS. 2 positions are modified to phosphoserine: S320 and S322. Phosphoserine; by PKC and GRK6 is present on residues S325 and S326. The interval 330 to 353 is disordered; that stretch reads LSKGKRGGHSSVSTESESSSFHSS. S331 is modified (phosphoserine; by GRK6). K332 is covalently cross-linked (Glycyl lysine isopeptide (Lys-Gly) (interchain with G-Cter in ubiquitin)). The span at 338 to 353 shows a compositional bias: low complexity; it reads HSSVSTESESSSFHSS. S340 is subject to Phosphoserine; by GRK6. Phosphoserine occurs at positions 349 and 352.

Belongs to the G-protein coupled receptor 1 family. In terms of assembly, monomer. Can form homodimers. Interacts with CD164. Interacts with ARRB2; the interaction is dependent on the C-terminal phosphorylation of CXCR4 and allows activation of MAPK1 and MAPK3. Interacts with ARR3; the interaction is dependent on the C-terminal phosphorylation of CXCR4 and modulates calcium mobilization. Interacts with RNF113A; the interaction, enhanced by CXCL12, promotes CXCR4 ubiquitination and subsequent degradation. Interacts (via the cytoplasmic C-terminal) with ITCH (via the WW domains I and II); the interaction, enhanced by CXCL12, promotes CXCR4 ubiquitination and leads to its degradation. Interacts with extracellular ubiquitin. Interacts with DBN1; this interaction is enhanced by antigenic stimulation. Following LPS binding, may form a complex with GDF5, HSP90AA1 and HSPA8. Phosphorylated on agonist stimulation. Rapidly phosphorylated on serine and threonine residues in the C-terminal. Phosphorylation at Ser-325 and Ser-326 leads to recruitment of ITCH, ubiquitination and protein degradation. In terms of processing, ubiquitinated after ligand binding, leading to its degradation. Ubiquitinated by ITCH at the cell membrane on agonist stimulation. The ubiquitin-dependent mechanism, endosomal sorting complex required for transport (ESCRT), then targets CXCR4 for lysosomal degradation. This process is dependent also on prior Ser-/Thr-phosphorylation in the C-terminal of CXCR4. Also binding of ARRB1 to STAM negatively regulates CXCR4 sorting to lysosomes though modulating ubiquitination of SFR5S. Post-translationally, sulfation is required for efficient binding of CXCL12/SDF-1alpha and promotes its dimerization. O- and N-glycosylated. N-glycosylation can mask coreceptor function. The O-glycosylation chondroitin sulfate attachment does not affect interaction with CXCL12/SDF-1alpha nor its coreceptor activity. In terms of tissue distribution, brain, heart, kidney, lung and liver.

The protein resides in the cell membrane. Its subcellular location is the cell junction. It localises to the early endosome. The protein localises to the late endosome. It is found in the lysosome. Functionally, receptor for the C-X-C chemokine CXCL12/SDF-1 that transduces a signal by increasing intracellular calcium ion levels and enhancing MAPK1/MAPK3 activation. Involved in the AKT signaling cascade. Plays a role in regulation of cell migration, e.g. during wound healing. Acts as a receptor for extracellular ubiquitin; leading to enhanced intracellular calcium ions and reduced cellular cAMP levels. Binds bacterial lipopolysaccharide (LPS) et mediates LPS-induced inflammatory response, including TNF secretion by monocytes. Involved in hematopoiesis and in cardiac ventricular septum formation. Also plays an essential role in vascularization of the gastrointestinal tract, probably by regulating vascular branching and/or remodeling processes in endothelial cells. Involved in cerebellar development. In the CNS, could mediate hippocampal-neuron survival. In Bos taurus (Bovine), this protein is C-X-C chemokine receptor type 4 (CXCR4).